Reading from the N-terminus, the 369-residue chain is Aminomethyltransferase (369 aa).

The protein belongs to the GcvT family. As to quaternary structure, the glycine cleavage system is composed of four proteins: P, T, L and H.

It catalyses the reaction N(6)-[(R)-S(8)-aminomethyldihydrolipoyl]-L-lysyl-[protein] + (6S)-5,6,7,8-tetrahydrofolate = N(6)-[(R)-dihydrolipoyl]-L-lysyl-[protein] + (6R)-5,10-methylene-5,6,7,8-tetrahydrofolate + NH4(+). In terms of biological role, the glycine cleavage system catalyzes the degradation of glycine. The chain is Aminomethyltransferase from Xanthomonas campestris pv. campestris (strain 8004).